Reading from the N-terminus, the 199-residue chain is Superoxide dismutase [Mn/Fe] (199 aa).

Residues histidine 27, histidine 81, aspartate 161, and histidine 165 each contribute to the Fe(3+) site. Positions 27, 81, 161, and 165 each coordinate Mn(2+).

This sequence belongs to the iron/manganese superoxide dismutase family. In terms of assembly, homodimer. Mn(2+) serves as cofactor. It depends on Fe(3+) as a cofactor.

It catalyses the reaction 2 superoxide + 2 H(+) = H2O2 + O2. Its function is as follows. Destroys superoxide anion radicals which are normally produced within the cells and which are toxic to biological systems. Catalyzes the dismutation of superoxide anion radicals into O2 and H2O2 by successive reduction and oxidation of the transition metal ion at the active site. Also contributes to the inhibition of lipid oxidation. Manganese-preferring enzyme, less active with iron than with manganese. In Staphylococcus xylosus, this protein is Superoxide dismutase [Mn/Fe] (sodA).